A 247-amino-acid polypeptide reads, in one-letter code: Ubiquinone biosynthesis O-methyltransferase (247 aa).

Residues Arg41, Gly72, Asp93, and Met136 each coordinate S-adenosyl-L-methionine.

It belongs to the methyltransferase superfamily. UbiG/COQ3 family.

It catalyses the reaction a 3-demethylubiquinol + S-adenosyl-L-methionine = a ubiquinol + S-adenosyl-L-homocysteine + H(+). The catalysed reaction is a 3-(all-trans-polyprenyl)benzene-1,2-diol + S-adenosyl-L-methionine = a 2-methoxy-6-(all-trans-polyprenyl)phenol + S-adenosyl-L-homocysteine + H(+). It functions in the pathway cofactor biosynthesis; ubiquinone biosynthesis. Its function is as follows. O-methyltransferase that catalyzes the 2 O-methylation steps in the ubiquinone biosynthetic pathway. In Bartonella quintana (strain Toulouse) (Rochalimaea quintana), this protein is Ubiquinone biosynthesis O-methyltransferase.